The following is a 986-amino-acid chain: Resact receptor (986 aa).

Residues 1–21 (MATTRLLFLLVVAVMITMVRS) form the signal peptide. Topologically, residues 22–507 (ATLHYNPTVI…GELCTNWGLY (486 aa)) are extracellular. N-linked (GlcNAc...) asparagine glycosylation is found at N185, N361, and N410. A helical transmembrane segment spans residues 508 to 528 (LGTLIPAFIIIFGGGLGYYIY). Residues 529-986 (RKRAYEAALD…SHSCSALHSS (458 aa)) are Cytoplasmic-facing. Residues 568–836 (LSAISVISNA…PNIIEVRTML (269 aa)) enclose the Protein kinase domain.

The protein resides in the membrane. It carries out the reaction GTP = 3',5'-cyclic GMP + diphosphate. In terms of biological role, implicated as a cell-surface receptor on spermatozoa for 'resact' a chemotactic peptide, and on various other cells as a receptor for atrial natriuretic peptide. The polypeptide is Resact receptor (Arbacia punctulata (Punctuate sea urchin)).